A 177-amino-acid polypeptide reads, in one-letter code: MSRVGKYPVTVPAGVTITVKDNVVTAKGKLGEMTYTAAGEVETRLEDNLIWVKPLSETKHARQQWGTTRARINNLVRGVSEGFSRKLELVGVGYKAAAQGKVLKLSLGFSHDVDFPIPEDLKITTPAPNQIEISGVDKQRVGQIASEIRSYRSPEPYKGKGVKYAGEQILRKEGKKK.

This sequence belongs to the universal ribosomal protein uL6 family. As to quaternary structure, part of the 50S ribosomal subunit.

Functionally, this protein binds to the 23S rRNA, and is important in its secondary structure. It is located near the subunit interface in the base of the L7/L12 stalk, and near the tRNA binding site of the peptidyltransferase center. This chain is Large ribosomal subunit protein uL6, found in Rhodospirillum rubrum (strain ATCC 11170 / ATH 1.1.1 / DSM 467 / LMG 4362 / NCIMB 8255 / S1).